The following is a 296-amino-acid chain: GTPase Era (296 aa).

Positions 3–170 (KSGFITIVGR…LELMVKYLPE (168 aa)) constitute an Era-type G domain. A G1 region spans residues 11 to 18 (GRPNVGKS). Position 11 to 18 (11 to 18 (GRPNVGKS)) interacts with GTP. Positions 37–41 (QTTRN) are G2. A G3 region spans residues 58-61 (DTPG). GTP-binding positions include 58 to 62 (DTPGI) and 120 to 123 (NKVD). The G4 stretch occupies residues 120-123 (NKVD). The tract at residues 149-151 (ISA) is G5. The KH type-2 domain occupies 201-278 (LSQEVPHGIA…NIKIWVKVRK (78 aa)).

The protein belongs to the TRAFAC class TrmE-Era-EngA-EngB-Septin-like GTPase superfamily. Era GTPase family. In terms of assembly, monomer.

The protein localises to the cytoplasm. Its subcellular location is the cell membrane. In terms of biological role, an essential GTPase that binds both GDP and GTP, with rapid nucleotide exchange. Plays a role in 16S rRNA processing and 30S ribosomal subunit biogenesis and possibly also in cell cycle regulation and energy metabolism. The sequence is that of GTPase Era from Clostridium perfringens (strain 13 / Type A).